Here is a 129-residue protein sequence, read N- to C-terminus: Putative pre-16S rRNA nuclease (129 aa).

This sequence belongs to the YqgF nuclease family.

The protein resides in the cytoplasm. In terms of biological role, could be a nuclease involved in processing of the 5'-end of pre-16S rRNA. The sequence is that of Putative pre-16S rRNA nuclease from Campylobacter jejuni subsp. doylei (strain ATCC BAA-1458 / RM4099 / 269.97).